The primary structure comprises 569 residues: Tetratricopeptide repeat protein 22 (569 aa).

TPR repeat units lie at residues 66-99 (PAVRHLLGAFAFYLEELDEARECFLEVAHEHPGN), 101-133 (NAWANLAHVYGRLGQEEEEEACAARLADLMGLA), 203-237 (ATLYIRLDGIFLELGSEEQKRLPAFNRTLALLRQV), 260-294 (KDTFSTTPMGVHDCGYSGTDPLDCFGKAIEIAKNQ), 295-328 (PPILNRLAKIFYFLGKQDMAIGTCNMALDVLRDP), 383-418 (FKAYLDIGQVYYYMGVDAVQELLAVDEAALNQALVF), and 432-465 (PELQLLRGKCLRIKGEDANAAACFKRAVELDDAG).

This Homo sapiens (Human) protein is Tetratricopeptide repeat protein 22 (TTC22).